The sequence spans 179 residues: Large ribosomal subunit protein uL5c (179 aa).

It belongs to the universal ribosomal protein uL5 family. In terms of assembly, part of the 50S ribosomal subunit; contacts the 5S rRNA.

The protein localises to the plastid. It is found in the chloroplast. Binds 5S rRNA, forms part of the central protuberance of the 50S subunit. The chain is Large ribosomal subunit protein uL5c (rpl5) from Euglena gracilis.